The sequence spans 305 residues: Superkiller complex protein 8 (305 aa).

Met1 is modified (N-acetylmethionine). N-acetylthreonine; in WD repeat-containing protein 61, N-terminally processed is present on Thr2. WD repeat units follow at residues 14–57 (AHDD…LDLQ), 62–101 (GHQLGVVSVDISHTLPIAASSSLDAHIRLWDLENGKQIKS), 104–143 (AGPVDAWTLAFSPDSQYLATGTHVGKVNIFGVESGKKEYS), 146–187 (TRGK…HTLE), 188–227 (GHAMPIRSLTFSPDSQLLVTASDDGYIKIYDVQHANLAGT), 230–269 (GHASWVLNVAFCPDDTHFVSSSSDKSVKVWDVGTRTCVHT), and 272–305 (DHQDQVWGVKYNGNGSKIVSVGDDQEIHIYDCPI).

Belongs to the SKI8 family. Component of the PAF1 complex, which consists of CDC73, PAF1, LEO1, CTR9, RTF1 and SKIC8. The PAF1 complex interacts with PHF5A. Within the PAF1 complex interacts directly with PHF5A. Component of the SKI complex which consists of SKIC2, SKIC3 and SKIC8.

The protein localises to the nucleus. The protein resides in the cytoplasm. In terms of biological role, component of the PAF1 complex (PAF1C) which has multiple functions during transcription by RNA polymerase II and is implicated in regulation of development and maintenance of embryonic stem cell pluripotency. PAF1C associates with RNA polymerase II through interaction with POLR2A CTD non-phosphorylated and 'Ser-2'- and 'Ser-5'-phosphorylated forms and is involved in transcriptional elongation, acting both independently and synergistically with TCEA1 and in cooperation with the DSIF complex and HTATSF1. PAF1C is required for transcription of Hox and Wnt target genes. PAF1C is involved in hematopoiesis and stimulates transcriptional activity of KMT2A/MLL1; it promotes leukemogenesis through association with KMT2A/MLL1-rearranged oncoproteins, such as KMT2A/MLL1-MLLT3/AF9 and KMT2A/MLL1-MLLT1/ENL. PAF1C is involved in histone modifications such as ubiquitination of histone H2B and methylation on histone H3 'Lys-4' (H3K4me3). PAF1C recruits the RNF20/40 E3 ubiquitin-protein ligase complex and the E2 enzyme UBE2A or UBE2B to chromatin which mediate monoubiquitination of 'Lys-120' of histone H2B (H2BK120ub1); UB2A/B-mediated H2B ubiquitination is proposed to be coupled to transcription. PAF1C is involved in mRNA 3' end formation probably through association with cleavage and poly(A) factors. In case of infection by influenza A strain H3N2, PAF1C associates with viral NS1 protein, thereby regulating gene transcription. Required for mono- and trimethylation on histone H3 'Lys-4' (H3K4me3), dimethylation on histone H3 'Lys-79' (H3K4me3). Required for Hox gene transcription. Also acts as a component of the SKI complex, a multiprotein complex that assists the RNA-degrading exosome during the mRNA decay and quality-control pathways. The SKI complex catalyzes mRNA extraction from 80S ribosomal complexes in the 3'-5' direction and channels mRNA to the cytosolic exosome for degradation. SKI-mediated extraction of mRNA from stalled ribosomes allow binding of the Pelota-HBS1L complex and subsequent ribosome disassembly by ABCE1 for ribosome recycling. In Homo sapiens (Human), this protein is Superkiller complex protein 8.